The sequence spans 241 residues: Lactate utilization protein C (241 aa).

This sequence belongs to the LutC/YkgG family.

In terms of biological role, is involved in L-lactate degradation and allows cells to grow with lactate as the sole carbon source. The polypeptide is Lactate utilization protein C (Bacillus velezensis (strain DSM 23117 / BGSC 10A6 / LMG 26770 / FZB42) (Bacillus amyloliquefaciens subsp. plantarum)).